Reading from the N-terminus, the 130-residue chain is Small ribosomal subunit protein uS11 (130 aa).

The protein belongs to the universal ribosomal protein uS11 family. Part of the 30S ribosomal subunit. Interacts with proteins S7 and S18. Binds to IF-3.

Functionally, located on the platform of the 30S subunit, it bridges several disparate RNA helices of the 16S rRNA. Forms part of the Shine-Dalgarno cleft in the 70S ribosome. This chain is Small ribosomal subunit protein uS11, found in Xylella fastidiosa (strain M12).